The sequence spans 309 residues: Homoserine kinase (309 aa).

Residue 91 to 101 (PIGSGLGSSAC) participates in ATP binding.

It belongs to the GHMP kinase family. Homoserine kinase subfamily.

It localises to the cytoplasm. The enzyme catalyses L-homoserine + ATP = O-phospho-L-homoserine + ADP + H(+). It functions in the pathway amino-acid biosynthesis; L-threonine biosynthesis; L-threonine from L-aspartate: step 4/5. Functionally, catalyzes the ATP-dependent phosphorylation of L-homoserine to L-homoserine phosphate. The chain is Homoserine kinase from Pectobacterium carotovorum subsp. carotovorum (strain PC1).